Consider the following 83-residue polypeptide: Sec-independent protein translocase protein TatA (83 aa).

The chain crosses the membrane as a helical span at residues 1–21 (MGSLSPWHWAILAVVVIVLFG). Residues 48–83 (NENKAEASIETPTPVQSQRVDPSAASGQDSTEARPA) are disordered. The segment covering 57–77 (ETPTPVQSQRVDPSAASGQDS) has biased composition (polar residues).

The protein belongs to the TatA/E family. The Tat system comprises two distinct complexes: a TatABC complex, containing multiple copies of TatA, TatB and TatC subunits, and a separate TatA complex, containing only TatA subunits. Substrates initially bind to the TatABC complex, which probably triggers association of the separate TatA complex to form the active translocon.

The protein resides in the cell membrane. Its function is as follows. Part of the twin-arginine translocation (Tat) system that transports large folded proteins containing a characteristic twin-arginine motif in their signal peptide across membranes. TatA could form the protein-conducting channel of the Tat system. This is Sec-independent protein translocase protein TatA from Mycobacterium bovis (strain BCG / Pasteur 1173P2).